Here is a 963-residue protein sequence, read N- to C-terminus: Importin-13 (963 aa).

20 HEAT repeats span residues 24-54 (ENVEKALHQLYYDPNIENKNLAQKWLMQAQV), 56-88 (PQAWHFSWQLLQPDKVPEIQYFGASALHIKISR), 95-135 (TDQY…LSMM), 142-179 (AVADMVRLFQAEDSPVDSQGRCLALLELLTVLPEEFQT), 194-231 (LAVECGAVFPLLEQLLQQPSSPSCVRQKVLKCFSSWVQ), 236-268 (LQDCEALIQAAFAALQDSELFDSSVEAIVNAIS), 276-325 (VNTL…ALLD), 330-372 (WQSF…DDIL), 375-438 (EAEK…YEML), 440-476 (AELLSNLYDKLGRLLTSSEEPYSWQHTEALLYGFQSI), 487-522 (VVPGLIGLIPRISISNVQLADTVMFTIGALSEWLAD), 524-558 (PVMINSVLPLVLHALGNPELSVSSVSTLKKICREC), 562-600 (LPPYAANIVAVSQDVLMKQIHKTSQCMWLMQALGFLLSA), 603-648 (VEEN…SNLF), 676-716 (PVVV…VKTL), 720-754 (FAPMVPQLCEMLGRMYSTVPQASALDLTRQLVHIF), 761-803 (FPPI…ALKR), 815-845 (VKAVFQCAVLALKFPEAPTVKASCGFFTELL), 860-893 (EDGRMLLIAVLEAIGGQASRSLMDCFADILFALN), and 897-931 (FSLLSMWIKEALQPPGFPSARLSPEQKDTFSQQIL). The 67-residue stretch at 45-111 (AQKWLMQAQV…KAHSFTQITR (67 aa)) folds into the Importin N-terminal domain.

This sequence belongs to the importin beta family. As to quaternary structure, interacts with UBC9, RAN, RBM8A, eIF-1A and PAX6. In terms of tissue distribution, expressed in fetal brain, heart, intestine and kidney.

The protein localises to the cytoplasm. The protein resides in the nucleus. In terms of biological role, functions in nuclear protein import as nuclear transport receptor. Serves as receptor for nuclear localization signals (NLS) in cargo substrates. Is thought to mediate docking of the importin/substrate complex to the nuclear pore complex (NPC) through binding to nucleoporin and the complex is subsequently translocated through the pore by an energy requiring, Ran-dependent mechanism. At the nucleoplasmic side of the NPC, Ran binds to the importin, the importin/substrate complex dissociates and importin is re-exported from the nucleus to the cytoplasm where GTP hydrolysis releases Ran. The directionality of nuclear import is thought to be conferred by an asymmetric distribution of the GTP- and GDP-bound forms of Ran between the cytoplasm and nucleus. Mediates the nuclear import of UBC9, the RBM8A/MAGOH complex, PAX6 and probably other members of the paired homeobox family. Also mediates nuclear export of eIF-1A, and the cytoplasmic release of eIF-1A is triggered by the loading of import substrates onto IPO13. In Rattus norvegicus (Rat), this protein is Importin-13 (Ipo13).